A 518-amino-acid polypeptide reads, in one-letter code: Cytochrome P450 3A27 (518 aa).

C447 serves as a coordination point for heme.

It belongs to the cytochrome P450 family. Heme is required as a cofactor.

It localises to the endoplasmic reticulum membrane. Its subcellular location is the microsome membrane. The enzyme catalyses an organic molecule + reduced [NADPH--hemoprotein reductase] + O2 = an alcohol + oxidized [NADPH--hemoprotein reductase] + H2O + H(+). Functionally, cytochromes P450 are a group of heme-thiolate monooxygenases. In liver microsomes, this enzyme is involved in an NADPH-dependent electron transport pathway. It oxidizes a variety of structurally unrelated compounds, including steroids, fatty acids, and xenobiotics. This chain is Cytochrome P450 3A27 (cyp3a27), found in Oncorhynchus mykiss (Rainbow trout).